A 99-amino-acid polypeptide reads, in one-letter code: Malonate decarboxylase acyl carrier protein (99 aa).

S25 is modified (O-(phosphoribosyl dephospho-coenzyme A)serine).

The protein belongs to the MdcC family. Post-translationally, covalently binds the prosthetic group of malonate decarboxylase.

It localises to the cytoplasm. Functionally, subunit of malonate decarboxylase, it is an acyl carrier protein to which acetyl and malonyl thioester residues are bound via a 2'-(5''-phosphoribosyl)-3'-dephospho-CoA prosthetic group and turn over during the catalytic mechanism. This is Malonate decarboxylase acyl carrier protein from Pseudomonas putida (strain GB-1).